We begin with the raw amino-acid sequence, 132 residues long: Small ribosomal subunit protein uS8 (132 aa).

It belongs to the universal ribosomal protein uS8 family. As to quaternary structure, part of the 30S ribosomal subunit. Contacts proteins S5 and S12.

Functionally, one of the primary rRNA binding proteins, it binds directly to 16S rRNA central domain where it helps coordinate assembly of the platform of the 30S subunit. This Rubrobacter xylanophilus (strain DSM 9941 / JCM 11954 / NBRC 16129 / PRD-1) protein is Small ribosomal subunit protein uS8.